The chain runs to 341 residues: Beta-ketoacyl-[acyl-carrier-protein] synthase III 1 (341 aa).

Residues Cys113 and His249 contribute to the active site. The segment at 250-254 is ACP-binding; it reads QANIR. Residue Asn279 is part of the active site.

It belongs to the thiolase-like superfamily. FabH family. Homodimer.

The protein resides in the cytoplasm. The enzyme catalyses malonyl-[ACP] + acetyl-CoA + H(+) = 3-oxobutanoyl-[ACP] + CO2 + CoA. It participates in lipid metabolism; fatty acid biosynthesis. Its function is as follows. Catalyzes the condensation reaction of fatty acid synthesis by the addition to an acyl acceptor of two carbons from malonyl-ACP. Catalyzes the first condensation reaction which initiates fatty acid synthesis and may therefore play a role in governing the total rate of fatty acid production. Possesses both acetoacetyl-ACP synthase and acetyl transacylase activities. Its substrate specificity determines the biosynthesis of branched-chain and/or straight-chain of fatty acids. The chain is Beta-ketoacyl-[acyl-carrier-protein] synthase III 1 from Deinococcus radiodurans (strain ATCC 13939 / DSM 20539 / JCM 16871 / CCUG 27074 / LMG 4051 / NBRC 15346 / NCIMB 9279 / VKM B-1422 / R1).